A 279-amino-acid chain; its full sequence is Probable endonuclease 4 (279 aa).

Residues H69, H109, E145, D179, H182, H216, D229, H231, and E261 each contribute to the Zn(2+) site.

This sequence belongs to the AP endonuclease 2 family. Requires Zn(2+) as cofactor.

It catalyses the reaction Endonucleolytic cleavage to 5'-phosphooligonucleotide end-products.. Its function is as follows. Endonuclease IV plays a role in DNA repair. It cleaves phosphodiester bonds at apurinic or apyrimidinic (AP) sites, generating a 3'-hydroxyl group and a 5'-terminal sugar phosphate. This Chlorobium phaeovibrioides (strain DSM 265 / 1930) (Prosthecochloris vibrioformis (strain DSM 265)) protein is Probable endonuclease 4.